We begin with the raw amino-acid sequence, 431 residues long: Glutamate-1-semialdehyde 2,1-aminomutase (431 aa).

Residue lysine 265 is modified to N6-(pyridoxal phosphate)lysine.

The protein belongs to the class-III pyridoxal-phosphate-dependent aminotransferase family. HemL subfamily. Homodimer. The cofactor is pyridoxal 5'-phosphate.

The protein localises to the cytoplasm. It catalyses the reaction (S)-4-amino-5-oxopentanoate = 5-aminolevulinate. The protein operates within porphyrin-containing compound metabolism; protoporphyrin-IX biosynthesis; 5-aminolevulinate from L-glutamyl-tRNA(Glu): step 2/2. This is Glutamate-1-semialdehyde 2,1-aminomutase from Aliivibrio salmonicida (strain LFI1238) (Vibrio salmonicida (strain LFI1238)).